The chain runs to 838 residues: Protein translocase subunit SecA (838 aa).

ATP contacts are provided by residues Q85, 103–107, and D493; that span reads GEGKT. Positions 823, 825, 834, and 835 each coordinate Zn(2+).

It belongs to the SecA family. As to quaternary structure, monomer and homodimer. Part of the essential Sec protein translocation apparatus which comprises SecA, SecYEG and auxiliary proteins SecDF. Other proteins may also be involved. The cofactor is Zn(2+).

The protein localises to the cell membrane. Its subcellular location is the cytoplasm. The catalysed reaction is ATP + H2O + cellular proteinSide 1 = ADP + phosphate + cellular proteinSide 2.. In terms of biological role, part of the Sec protein translocase complex. Interacts with the SecYEG preprotein conducting channel. Has a central role in coupling the hydrolysis of ATP to the transfer of proteins into and across the cell membrane, serving as an ATP-driven molecular motor driving the stepwise translocation of polypeptide chains across the membrane. The protein is Protein translocase subunit SecA of Streptococcus gordonii (strain Challis / ATCC 35105 / BCRC 15272 / CH1 / DL1 / V288).